The primary structure comprises 1036 residues: Hexagonally packed intermediate-layer surface protein (1036 aa).

The N-terminal stretch at Met1–Ala17 is a signal peptide. 3 disulfide bridges follow: Cys74–Cys86, Cys256–Cys275, and Cys642–Cys754.

In terms of processing, glycosylated; contains six glycans. Acylated in the N-terminal region. Post-translationally, the N-terminus is blocked.

The protein localises to the secreted. The protein resides in the cell wall. It is found in the S-layer. In terms of biological role, shape maintenance, possible protection from noxious enzymes or exogenous and unsettling DNA, and may mediate homotypic cell-cell contacts. This is Hexagonally packed intermediate-layer surface protein (hpi) from Deinococcus radiodurans.